Reading from the N-terminus, the 133-residue chain is Fatty acid-binding protein, heart (133 aa).

Position 2 is an N-acetylvaline (Val-2). Phosphothreonine is present on Thr-8. Tyr-20 is subject to Phosphotyrosine; by Tyr-kinases. Position 23 is a phosphoserine (Ser-23). Thr-30 carries the phosphothreonine modification. Phosphoserine is present on Ser-83. 127-129 (RTY) contacts (9Z)-octadecenoate. 127–129 (RTY) serves as a coordination point for hexadecanoate. 127 to 129 (RTY) serves as a coordination point for octadecanoate.

The protein belongs to the calycin superfamily. Fatty-acid binding protein (FABP) family.

The protein resides in the cytoplasm. In terms of biological role, FABPs are thought to play a role in the intracellular transport of long-chain fatty acids and their acyl-CoA esters. This Homo sapiens (Human) protein is Fatty acid-binding protein, heart (FABP3).